A 365-amino-acid polypeptide reads, in one-letter code: Putative chalcone synthase (365 aa).

C144 is an active-site residue.

The protein belongs to the thiolase-like superfamily. Chalcone/stilbene synthases family.

The catalysed reaction is (E)-4-coumaroyl-CoA + 3 malonyl-CoA + 3 H(+) = 2',4,4',6'-tetrahydroxychalcone + 3 CO2 + 4 CoA. The polypeptide is Putative chalcone synthase (bcsA) (Bacillus subtilis (strain 168)).